Consider the following 339-residue polypeptide: Ketol-acid reductoisomerase (NADP(+)) (339 aa).

In terms of domain architecture, KARI N-terminal Rossmann spans 1–182; sequence MRVYYDRDAD…GGGRSGIIET (182 aa). NADP(+) is bound by residues 24-27, Arg-48, Ser-51, Thr-53, and 83-86; these read YGSQ and DEHQ. Residue His-108 is part of the active site. Position 134 (Gly-134) interacts with NADP(+). Residues 183 to 328 form the KARI C-terminal knotted domain; it reads NFREECETDL…ARLRGMMPWI (146 aa). Mg(2+)-binding residues include Asp-191, Glu-195, Glu-227, and Glu-231. Ser-252 contributes to the substrate binding site.

Belongs to the ketol-acid reductoisomerase family. Mg(2+) is required as a cofactor.

The enzyme catalyses (2R)-2,3-dihydroxy-3-methylbutanoate + NADP(+) = (2S)-2-acetolactate + NADPH + H(+). It catalyses the reaction (2R,3R)-2,3-dihydroxy-3-methylpentanoate + NADP(+) = (S)-2-ethyl-2-hydroxy-3-oxobutanoate + NADPH + H(+). It functions in the pathway amino-acid biosynthesis; L-isoleucine biosynthesis; L-isoleucine from 2-oxobutanoate: step 2/4. Its pathway is amino-acid biosynthesis; L-valine biosynthesis; L-valine from pyruvate: step 2/4. Involved in the biosynthesis of branched-chain amino acids (BCAA). Catalyzes an alkyl-migration followed by a ketol-acid reduction of (S)-2-acetolactate (S2AL) to yield (R)-2,3-dihydroxy-isovalerate. In the isomerase reaction, S2AL is rearranged via a Mg-dependent methyl migration to produce 3-hydroxy-3-methyl-2-ketobutyrate (HMKB). In the reductase reaction, this 2-ketoacid undergoes a metal-dependent reduction by NADPH to yield (R)-2,3-dihydroxy-isovalerate. The protein is Ketol-acid reductoisomerase (NADP(+)) of Caulobacter sp. (strain K31).